Here is a 79-residue protein sequence, read N- to C-terminus: CDC42 small effector protein 1 (79 aa).

S-palmitoyl cysteine attachment occurs at residues Cys-10 and Cys-11. The CRIB domain maps to 30 to 43 (IGEPMNFVHLTHIG). A disordered region spans residues 41–79 (HIGSGDMGASDGLPRAGGVQEQMRSKCGRDRQWSNSGVL). A compositionally biased stretch (basic and acidic residues) spans 63–72 (MRSKCGRDRQ).

The protein belongs to the CDC42SE/SPEC family.

Its subcellular location is the cytoplasm. It localises to the cytoskeleton. It is found in the cell membrane. Probably involved in the organization of the actin cytoskeleton by acting downstream of CDC42, inducing actin filament assembly. The protein is CDC42 small effector protein 1 (cdc42se1) of Xenopus tropicalis (Western clawed frog).